The chain runs to 311 residues: Porphobilinogen deaminase (311 aa).

Cys-241 carries the S-(dipyrrolylmethanemethyl)cysteine modification.

Belongs to the HMBS family. Monomer. The cofactor is dipyrromethane.

It catalyses the reaction 4 porphobilinogen + H2O = hydroxymethylbilane + 4 NH4(+). It functions in the pathway porphyrin-containing compound metabolism; protoporphyrin-IX biosynthesis; coproporphyrinogen-III from 5-aminolevulinate: step 2/4. Its function is as follows. Tetrapolymerization of the monopyrrole PBG into the hydroxymethylbilane pre-uroporphyrinogen in several discrete steps. The chain is Porphobilinogen deaminase from Campylobacter curvus (strain 525.92).